The primary structure comprises 361 residues: Aminomethyltransferase (361 aa).

The protein belongs to the GcvT family. The glycine cleavage system is composed of four proteins: P, T, L and H.

The enzyme catalyses N(6)-[(R)-S(8)-aminomethyldihydrolipoyl]-L-lysyl-[protein] + (6S)-5,6,7,8-tetrahydrofolate = N(6)-[(R)-dihydrolipoyl]-L-lysyl-[protein] + (6R)-5,10-methylene-5,6,7,8-tetrahydrofolate + NH4(+). In terms of biological role, the glycine cleavage system catalyzes the degradation of glycine. In Phocaeicola vulgatus (strain ATCC 8482 / DSM 1447 / JCM 5826 / CCUG 4940 / NBRC 14291 / NCTC 11154) (Bacteroides vulgatus), this protein is Aminomethyltransferase.